The following is a 63-amino-acid chain: Large ribosomal subunit protein uL29 (63 aa).

The protein belongs to the universal ribosomal protein uL29 family.

The chain is Large ribosomal subunit protein uL29 from Bacillus cereus (strain ATCC 14579 / DSM 31 / CCUG 7414 / JCM 2152 / NBRC 15305 / NCIMB 9373 / NCTC 2599 / NRRL B-3711).